We begin with the raw amino-acid sequence, 291 residues long: D-alanyl-D-alanine carboxypeptidase DacB2 (291 aa).

The first 22 residues, 1–22 (MRKLMTATAALCACAVTVSAGA), serve as a signal peptide directing secretion. The active-site Acyl-ester intermediate is Ser69. The active-site Proton acceptor is Lys72. Residue Ser124 is part of the active site.

This sequence belongs to the peptidase S11 family.

Its subcellular location is the periplasm. The protein operates within cell wall biogenesis; peptidoglycan biosynthesis. Inhibited by the beta-lactam antibiotic meropenem. Inhibited by the non-specific inhibitor phenylmethylsulfonyl fluoride (PMSF). Functionally, probably cleaves the terminal D-Ala-D-Ala dipeptide of the peptidoglycan stem peptide. Shows significant D,D-carboxypeptidase activity in vitro. Acts on the synthetic penta-peptide substrate Penta-DAP (L-Ala-gamma-D-Gln-DAP-D-Ala-D-Ala). Also shows weak activity on Penta-Lys (L-Ala-gamma-Glu-L-Lys-D-Ala-D-Ala). The catalytic domain binds weakly to peptidoglycan in vitro. Plays an important role in the maintenance of colony morphology and cell wall permeability and integrity. The protein is D-alanyl-D-alanine carboxypeptidase DacB2 of Mycobacterium tuberculosis (strain ATCC 25618 / H37Rv).